The sequence spans 216 residues: Refilin-B (216 aa).

The segment at 1–52 (MVGRLSLQDVPELVDTKKKGDGVLDSPDSGLPPSPSPSHWGLAAATGGGGER) is disordered. Phosphoserine occurs at positions 6 and 26.

It belongs to the Refilin family. In terms of assembly, interacts with FLNA and FLNB.

Its subcellular location is the cytoplasm. The protein resides in the cytoskeleton. Its function is as follows. Involved in the regulation of the perinuclear actin network and nuclear shape through interaction with filamins. Plays an essential role in the formation of cartilaginous skeletal elements. This Rattus norvegicus (Rat) protein is Refilin-B.